Consider the following 138-residue polypeptide: Translation initiation factor 2 subunit beta (138 aa).

The protein belongs to the eIF-2-beta/eIF-5 family. In terms of assembly, heterotrimer composed of an alpha, a beta and a gamma chain.

EIF-2 functions in the early steps of protein synthesis by forming a ternary complex with GTP and initiator tRNA. The protein is Translation initiation factor 2 subunit beta of Methanococcus maripaludis (strain C6 / ATCC BAA-1332).